The sequence spans 414 residues: tRNA N6-adenosine threonylcarbamoyltransferase, mitochondrial (414 aa).

The transit peptide at 1–29 directs the protein to the mitochondrion; it reads MLMLSKTAGAIPRPPRSNVRGFIRRFNVQ. N6-acetyllysine occurs at positions 74 and 140. 2 residues coordinate a divalent metal cation: His147 and His151. Substrate is bound by residues 169-173 and Asp202; that span reads LISGG. The residue at position 203 (Lys203) is an N6-acetyllysine. Substrate-binding residues include Gly222 and Glu226. N6-acetyllysine is present on residues Lys230 and Lys299. Substrate-binding positions include 329–330 and Thr357; that span reads SN. Asp358 is an a divalent metal cation binding site.

It belongs to the KAE1 / TsaD family. In terms of assembly, monomer. It depends on a divalent metal cation as a cofactor.

It is found in the mitochondrion. The catalysed reaction is L-threonylcarbamoyladenylate + adenosine(37) in tRNA = N(6)-L-threonylcarbamoyladenosine(37) in tRNA + AMP + H(+). Required for the formation of a threonylcarbamoyl group on adenosine at position 37 (t(6)A37) in mitochondrial tRNAs that read codons beginning with adenine. Probably involved in the transfer of the threonylcarbamoyl moiety of threonylcarbamoyl-AMP (TC-AMP) to the N6 group of A37. Involved in mitochondrial genome maintenance. The sequence is that of tRNA N6-adenosine threonylcarbamoyltransferase, mitochondrial from Rattus norvegicus (Rat).